The following is a 332-amino-acid chain: DNA-directed RNA polymerase subunit alpha (332 aa).

The segment at 1–232 (MQVSNFLKPR…DQLTAFVELE (232 aa)) is alpha N-terminal domain (alpha-NTD). The alpha C-terminal domain (alpha-CTD) stretch occupies residues 246 to 332 (IDPVLLQPID…LREEETKVTA (87 aa)).

The protein belongs to the RNA polymerase alpha chain family. As to quaternary structure, homodimer. The RNAP catalytic core consists of 2 alpha, 1 beta, 1 beta' and 1 omega subunit. When a sigma factor is associated with the core the holoenzyme is formed, which can initiate transcription.

The enzyme catalyses RNA(n) + a ribonucleoside 5'-triphosphate = RNA(n+1) + diphosphate. Functionally, DNA-dependent RNA polymerase catalyzes the transcription of DNA into RNA using the four ribonucleoside triphosphates as substrates. The polypeptide is DNA-directed RNA polymerase subunit alpha (Nitrosococcus oceani (strain ATCC 19707 / BCRC 17464 / JCM 30415 / NCIMB 11848 / C-107)).